Reading from the N-terminus, the 430-residue chain is Probable proton-coupled zinc antiporter SLC30A4 (430 aa).

The Cytoplasmic portion of the chain corresponds to 1 to 113; that stretch reads MAGPGAWKRL…LLKQRKVKTR (113 aa). S36 carries the phosphoserine modification. A helical transmembrane segment spans residues 114-134; sequence LTIAAVLYLLFMIGELVGGYM. The Lumenal portion of the chain corresponds to 135–143; the sequence is ANSLAIMTD. The chain crosses the membrane as a helical span at residues 144 to 164; that stretch reads ALHMLTDLSAIILTLLALWLS. Positions 146 and 150 each coordinate Zn(2+). The Cytoplasmic portion of the chain corresponds to 165 to 178; sequence SKSPTRRFTFGFHR. Residues 179–199 traverse the membrane as a helical segment; sequence LEVLSAMISVMLVYVLMGFLL. The Lumenal segment spans residues 200–216; the sequence is YEAVQRTIHMNYEINGD. The helical transmembrane segment at 217-237 threads the bilayer; it reads VMLITAAVGVAVNVIMGFLLN. Topologically, residues 238–275 are cytoplasmic; that stretch reads QSGHHHSHAHSHSLPSNSPSMVSSGHNHGQDSLAVRAA. The segment at 240–265 is zinc binding; it reads GHHHSHAHSHSLPSNSPSMVSSGHNH. Residues 245-264 are disordered; that stretch reads HAHSHSLPSNSPSMVSSGHN. Residues 249 to 263 are compositionally biased toward low complexity; the sequence is HSLPSNSPSMVSSGH. A helical membrane pass occupies residues 276 to 296; it reads FVHALGDLVQSVGVLIAAYII. H278 and D282 together coordinate Zn(2+). Residues 297–311 lie on the Lumenal side of the membrane; that stretch reads RFKPEYKIADPICTY. Residues 312–332 traverse the membrane as a helical segment; sequence IFSLLVAFTTFRIIWDTVVII. The Cytoplasmic segment spans residues 333-430; it reads LEGVPSHLNV…TCANCHSSST (98 aa).

Belongs to the cation diffusion facilitator (CDF) transporter (TC 2.A.4) family. SLC30A subfamily. As to quaternary structure, homodimerization could regulate efficiency for zinc transport. Interacts with TMEM163. Widely expressed. Highly expressed in the brain and in mammary epithelial cell lines.

The protein resides in the endosome membrane. It is found in the late endosome membrane. Its subcellular location is the lysosome membrane. It carries out the reaction Zn(2+)(in) + 2 H(+)(out) = Zn(2+)(out) + 2 H(+)(in). Functionally, probable proton-coupled zinc ion antiporter mediating zinc import from cytoplasm potentially into the endocytic compartment. Controls zinc deposition in milk. The protein is Probable proton-coupled zinc antiporter SLC30A4 of Mus musculus (Mouse).